The chain runs to 440 residues: Gap junction gamma-2 protein (440 aa).

Over 1 to 21 (MTNMSWSFLTRLLEEIHNHST) the chain is Cytoplasmic. The chain crosses the membrane as a helical span at residues 22 to 42 (FVGKVWLTVLVVFRIVLTAVG). The Extracellular segment spans residues 43–78 (GESIYSDEQSKFTCNTRQPGCDNVCYDAFAPLSHVR). Residues 79–99 (FWVFQIVVISTPSVMYLGYAV) form a helical membrane-spanning segment. At 100 to 223 (HRLARASEQE…AQLVVRAAFE (124 aa)) the chain is on the cytoplasmic side. The disordered stretch occupies residues 108 to 199 (QERRRALRRR…TPGPAGQHDG (92 aa)). A compositionally biased stretch (basic residues) spans 112–124 (RALRRRPGPRRLP). Over residues 150 to 173 (LEEDEDEEPGAPEGPGEDTEEERT) the composition is skewed to acidic residues. A helical transmembrane segment spans residues 224–244 (VAFLVGQYLLYGFEVPPFFAC). Residues 245–264 (SRQPCPHVVDCFVSRPTEKT) lie on the Extracellular side of the membrane. A helical membrane pass occupies residues 265–285 (VFLLVMYVVSCLCLLLNLCEM). Residues 286–440 (AHLGLGSAQD…SRDGKATVWI (155 aa)) lie on the Cytoplasmic side of the membrane. The disordered stretch occupies residues 368-440 (ADRDSPPCSG…SRDGKATVWI (73 aa)). At S372 the chain carries Phosphoserine. Positions 380 to 401 (ATSRGPPRAGGPASGTGSATSG) are enriched in low complexity.

It belongs to the connexin family. Gamma-type subfamily. As to quaternary structure, a connexon is composed of a hexamer of connexins. Interacts with TJP1. As to expression, mainly expressed by oligodendrocytes in the central nervous system. Expressed in optic nerve (at protein level).

Its subcellular location is the cell membrane. It localises to the cell junction. The protein localises to the gap junction. In terms of biological role, one gap junction consists of a cluster of closely packed pairs of transmembrane channels, the connexons, through which materials of low MW diffuse from one cell to a neighboring cell. May play a role in myelination in central and peripheral nervous systems. This is Gap junction gamma-2 protein (Gjc2) from Rattus norvegicus (Rat).